The sequence spans 364 residues: RNA polymerase II holoenzyme cyclin-like subunit (364 aa).

The region spanning 53–143 (QQINRLSKRI…VGECEFSLIS (91 aa)) is the Cyclin N-terminal domain. The disordered stretch occupies residues 268-303 (PGFGSQGSQQQAGFSQGNSQGSLQGDSAAAEPKKVT). Residues 273 to 289 (QGSQQQAGFSQGNSQGS) show a composition bias toward low complexity.

The protein belongs to the cyclin family. Cyclin C subfamily. In terms of assembly, component of the SRB8-11 complex, a regulatory module of the Mediator complex.

The protein resides in the nucleus. Functionally, component of the SRB8-11 complex. The SRB8-11 complex is a regulatory module of the Mediator complex which is itself involved in regulation of basal and activated RNA polymerase II-dependent transcription. The SRB8-11 complex may be involved in the transcriptional repression of a subset of genes regulated by Mediator. It may inhibit the association of the Mediator complex with RNA polymerase II to form the holoenzyme complex. The SRB8-11 complex phosphorylates the C-terminal domain (CTD) of the largest subunit of RNA polymerase II. The protein is RNA polymerase II holoenzyme cyclin-like subunit (SSN8) of Chaetomium globosum (strain ATCC 6205 / CBS 148.51 / DSM 1962 / NBRC 6347 / NRRL 1970) (Soil fungus).